The sequence spans 106 residues: Pyrimidine/purine nucleoside phosphorylase (106 aa).

This sequence belongs to the nucleoside phosphorylase PpnP family.

The enzyme catalyses a purine D-ribonucleoside + phosphate = a purine nucleobase + alpha-D-ribose 1-phosphate. It catalyses the reaction adenosine + phosphate = alpha-D-ribose 1-phosphate + adenine. It carries out the reaction cytidine + phosphate = cytosine + alpha-D-ribose 1-phosphate. The catalysed reaction is guanosine + phosphate = alpha-D-ribose 1-phosphate + guanine. The enzyme catalyses inosine + phosphate = alpha-D-ribose 1-phosphate + hypoxanthine. It catalyses the reaction thymidine + phosphate = 2-deoxy-alpha-D-ribose 1-phosphate + thymine. It carries out the reaction uridine + phosphate = alpha-D-ribose 1-phosphate + uracil. The catalysed reaction is xanthosine + phosphate = alpha-D-ribose 1-phosphate + xanthine. Its function is as follows. Catalyzes the phosphorolysis of diverse nucleosides, yielding D-ribose 1-phosphate and the respective free bases. Can use uridine, adenosine, guanosine, cytidine, thymidine, inosine and xanthosine as substrates. Also catalyzes the reverse reactions. In Burkholderia ambifaria (strain MC40-6), this protein is Pyrimidine/purine nucleoside phosphorylase.